We begin with the raw amino-acid sequence, 510 residues long: Probable cytochrome P450 312a1 (510 aa).

Cysteine 455 provides a ligand contact to heme.

It belongs to the cytochrome P450 family. It depends on heme as a cofactor.

The protein resides in the endoplasmic reticulum membrane. Its subcellular location is the microsome membrane. In terms of biological role, may be involved in the metabolism of insect hormones and in the breakdown of synthetic insecticides. The chain is Probable cytochrome P450 312a1 (Cyp312a1) from Drosophila melanogaster (Fruit fly).